The primary structure comprises 284 residues: Tropomyosin-1 (284 aa).

2 disordered regions span residues 1–26 and 96–124; these read MDAI…DTCE and EEDL…DENN. Residues 1–276 adopt a coiled-coil conformation; it reads MDAIKKKMQA…YKSLADEMDS (276 aa). Residues 12–26 are compositionally biased toward basic and acidic residues; the sequence is KLEKDNAMDKADTCE. Residues 107 to 121 are compositionally biased toward polar residues; the sequence is GTAQQKLLEAQQSAD.

This sequence belongs to the tropomyosin family. Homodimer.

In terms of biological role, tropomyosin, in association with the troponin complex, plays a central role in the calcium dependent regulation of muscle contraction. The polypeptide is Tropomyosin-1 (Bombyx mori (Silk moth)).